The primary structure comprises 444 residues: Sensor protein CiaH (444 aa).

Helical transmembrane passes span 21–41 (FGVF…VMHS) and 183–203 (LIVV…LYLA). The Histidine kinase domain maps to 223–438 (NASHELRTPL…IFEVKIAIQT (216 aa)). His226 is modified (phosphohistidine; by autocatalysis).

Its subcellular location is the cell membrane. The enzyme catalyses ATP + protein L-histidine = ADP + protein N-phospho-L-histidine.. Functionally, member of the two-component regulatory system CiaH/CiaR. Involved in early steps of competence regulation and in penicillin susceptibility. Probably phosphorylates CiaR. In Streptococcus pneumoniae serotype 4 (strain ATCC BAA-334 / TIGR4), this protein is Sensor protein CiaH (ciaH).